Here is a 425-residue protein sequence, read N- to C-terminus: Kynureninase (425 aa).

Pyridoxal 5'-phosphate is bound by residues Leu105, Thr106, 133–136 (FPSD), Asp218, His221, and Tyr243. The residue at position 244 (Lys244) is an N6-(pyridoxal phosphate)lysine. 2 residues coordinate pyridoxal 5'-phosphate: Trp274 and Asn302.

This sequence belongs to the kynureninase family. In terms of assembly, homodimer. It depends on pyridoxal 5'-phosphate as a cofactor.

It carries out the reaction L-kynurenine + H2O = anthranilate + L-alanine + H(+). The enzyme catalyses 3-hydroxy-L-kynurenine + H2O = 3-hydroxyanthranilate + L-alanine + H(+). It functions in the pathway amino-acid degradation; L-kynurenine degradation; L-alanine and anthranilate from L-kynurenine: step 1/1. It participates in cofactor biosynthesis; NAD(+) biosynthesis; quinolinate from L-kynurenine: step 2/3. In terms of biological role, catalyzes the cleavage of L-kynurenine (L-Kyn) and L-3-hydroxykynurenine (L-3OHKyn) into anthranilic acid (AA) and 3-hydroxyanthranilic acid (3-OHAA), respectively. The chain is Kynureninase from Flavobacterium psychrophilum (strain ATCC 49511 / DSM 21280 / CIP 103535 / JIP02/86).